The sequence spans 215 residues: Glutaredoxin 2 (215 aa).

A GST N-terminal domain is found at 1–77 (MKLYIYDHCP…YVDKLDGKPL (77 aa)). A disulfide bridge links Cys9 with Cys12.

The protein belongs to the glutaredoxin family.

Functionally, involved in reducing some disulfides in a coupled system with glutathione reductase. Does not act as hydrogen donor for ribonucleotide reductase. This chain is Glutaredoxin 2 (grxB), found in Escherichia coli O157:H7.